We begin with the raw amino-acid sequence, 296 residues long: NAD kinase (296 aa).

Aspartate 73 (proton acceptor) is an active-site residue. NAD(+) is bound by residues 73 to 74 (DG), lysine 78, 151 to 152 (NE), arginine 178, aspartate 180, and 191 to 196 (TAHAMS).

Belongs to the NAD kinase family. The cofactor is a divalent metal cation.

The protein resides in the cytoplasm. It carries out the reaction NAD(+) + ATP = ADP + NADP(+) + H(+). Its function is as follows. Involved in the regulation of the intracellular balance of NAD and NADP, and is a key enzyme in the biosynthesis of NADP. Catalyzes specifically the phosphorylation on 2'-hydroxyl of the adenosine moiety of NAD to yield NADP. The sequence is that of NAD kinase from Francisella tularensis subsp. novicida (strain U112).